The chain runs to 460 residues: Allantoinase (460 aa).

Positions 70, 72, 157, 193, 250, and 323 each coordinate Zn(2+). An N6-carboxylysine modification is found at Lys-157.

This sequence belongs to the metallo-dependent hydrolases superfamily. Allantoinase family. As to quaternary structure, homotetramer. The cofactor is Zn(2+). In terms of processing, carboxylation allows a single lysine to coordinate two zinc ions.

It carries out the reaction (S)-allantoin + H2O = allantoate + H(+). It participates in nitrogen metabolism; (S)-allantoin degradation; allantoate from (S)-allantoin: step 1/1. Its function is as follows. Catalyzes the conversion of allantoin (5-ureidohydantoin) to allantoic acid by hydrolytic cleavage of the five-member hydantoin ring. Involved in the utilization of purines as secondary nitrogen sources, when primary sources are limiting. This chain is Allantoinase (DAL1), found in Saccharomyces cerevisiae (strain ATCC 204508 / S288c) (Baker's yeast).